The following is a 1317-amino-acid chain: MLDVNFFDELRIGLATADDIRNWSYGEVKKPETINYRTLKPEKDGLFCEKIFGPTRDWECYCGKYKRVRFKGIICERCGVEVTRAKVRRERMGHIELAAPVTHIWYFKGVPSRLGYLLDLAPKDLEKIIYFAAYVITSVDDEMRHNELSTLEAEMAVEKKAVEDQRDADLEARAQKLEADLAELEAEGAKSDVRRKVRDSGEREMRQLRDRAQRELDRLDEIWNTFTKLAPKQLIVDEVLYRELQDRYGEYFTGAMGAESIKKLIENFDIDAEAESLREVIRSGKGQKKLRALKRLKVVAAFQQSGNSPMGMVLDAVPVIPPELRPMVQLDGGRFATSDLNDLYRRVINRNNRLKRLIDLGAPEIIVNNEKRMLQESVDALFDNGRRGRPVTGPGNRPLKSLSDLLKGKQGRFRQNLLGKRVDYSGRSVIVVGPQLKLHQCGLPKLMALELFKPFVMKRLVDLNHAQNIKSAKRMVERQRPQVWDVLEEVIAEHPVLLNRAPTLHRLGIQAFEPQLVEGKAIQLHPLVCEAFNADFDGDQMAVHLPLSAEAQAEARILMLSSNNILSPASGKPLAMPRLDMVTGLYYLTTLVEGATGEYQAATKDAPEQGVYSSPAEAIMAMDRGALSVRAKIKVRLTELRPPTDLEAQLFENGWKPGDAWTAETTLGRVMFNELLPKSYPFVNEQMHKKVQARIINDLAERFPMIVVAQTVDKLKDAGFYWATRSGVTVSMADVLVPPQKQEILERHEAEADAIERKYQRGALNHTERNESLVKIWQDATEEVGKALEEFYPADNPIITIVKSGATGNLTQTRTLAGMKGLVTNPKGEFIPRPIKSSFREGLTVLEYFINTHGARKGLADTALRTADSGYLTRRLVDVSQDVIVREHDCETERGINVTLAERGPDGTLIRDAHVETSAFARTLATDAVDANGNVIIERGHDLGDPAIDALLAAGITTVKVRSVLTCTSATGVCAMCYGRSMATGKLVDIGEAVGIVAAQSIGEPGTQLTMRTFHQGGVTGGADIVGGLPRVQELFEARVPRNKAPIADVAGRVRLEESDKFFKITIVPDDGGEEVVYDKLSKRQRLRVITHEDGTEGVLSDGDHVEVGDQLMEGAADPHEVLRVQGPREVQIHLVKEVQEVYRAQGVSIHDKHIEVIVRQMLRRVTIIDSGSTEFLPGSLTERAEFEAENRRVVAEGGEPAAGRPVLMGITKASLATDSWLSAASFQETTRVLTDAAINCRSDKLNGLKENVIIGKLIPAGTGISRYRNIQVQPTEEARAAAYTIPSYEDQYYSPDFGQATGAAVPLDDYGYSDYR.

Zn(2+) contacts are provided by Cys60, Cys62, Cys75, and Cys78. 3 residues coordinate Mg(2+): Asp535, Asp537, and Asp539. Residues Cys890, Cys967, Cys974, and Cys977 each coordinate Zn(2+).

The protein belongs to the RNA polymerase beta' chain family. In terms of assembly, the RNAP catalytic core consists of 2 alpha, 1 beta, 1 beta' and 1 omega subunit. When a sigma factor is associated with the core the holoenzyme is formed, which can initiate transcription. It depends on Mg(2+) as a cofactor. Requires Zn(2+) as cofactor.

It carries out the reaction RNA(n) + a ribonucleoside 5'-triphosphate = RNA(n+1) + diphosphate. In terms of biological role, DNA-dependent RNA polymerase catalyzes the transcription of DNA into RNA using the four ribonucleoside triphosphates as substrates. In Mycolicibacterium smegmatis (strain ATCC 700084 / mc(2)155) (Mycobacterium smegmatis), this protein is DNA-directed RNA polymerase subunit beta'.